Here is a 146-residue protein sequence, read N- to C-terminus: Anti-sigma F factor (146 aa).

The protein belongs to the anti-sigma-factor family.

It carries out the reaction L-seryl-[protein] + ATP = O-phospho-L-seryl-[protein] + ADP + H(+). The enzyme catalyses L-threonyl-[protein] + ATP = O-phospho-L-threonyl-[protein] + ADP + H(+). In terms of biological role, binds to sigma F and blocks its ability to form an RNA polymerase holoenzyme (E-sigma F). Phosphorylates SpoIIAA on a serine residue. This phosphorylation may enable SpoIIAA to act as an anti-anti-sigma factor that counteracts SpoIIAB and thus releases sigma F from inhibition. In Geobacillus stearothermophilus (Bacillus stearothermophilus), this protein is Anti-sigma F factor.